A 343-amino-acid chain; its full sequence is Phosphate acyltransferase (343 aa).

It belongs to the PlsX family. Homodimer. Probably interacts with PlsY.

It is found in the cytoplasm. The enzyme catalyses a fatty acyl-[ACP] + phosphate = an acyl phosphate + holo-[ACP]. Its pathway is lipid metabolism; phospholipid metabolism. Catalyzes the reversible formation of acyl-phosphate (acyl-PO(4)) from acyl-[acyl-carrier-protein] (acyl-ACP). This enzyme utilizes acyl-ACP as fatty acyl donor, but not acyl-CoA. This is Phosphate acyltransferase from Acidovorax sp. (strain JS42).